Reading from the N-terminus, the 570-residue chain is NADPH oxidase 2 (570 aa).

Residues 2–9 (GNWAVNEG) are Cytoplasmic-facing. The helical transmembrane segment at 10-36 (LSIFVILVWLGLNVFLFVWYYRVYDIP) threads the bilayer. Residues 37 to 46 (PKFFYTRKLL) are Extracellular-facing. Residues 47-72 (GSALALARAPAACLNFNCMLILLPVC) traverse the membrane as a helical segment. In terms of domain architecture, Ferric oxidoreductase spans 54-286 (RAPAACLNFN…MFLYLCERLV (233 aa)). Over 73 to 95 (RNLLSFLRGSSACCSTRVRRQLD) the chain is Cytoplasmic. A helical transmembrane segment spans residues 96 to 130 (RNLTFHKMVAWMIALHSAIHTIAHLFNVEWCVNAR). His101 and His115 together coordinate heme b. At 131–163 (VNNSDPYSVALSELGDRQNESYLNFARKRIKNP) the chain is on the extracellular side. Asn132 and Asn149 each carry an N-linked (GlcNAc...) asparagine glycan. Lys161 participates in a covalent cross-link: Glycyl lysine isopeptide (Lys-Gly) (interchain with G-Cter in ubiquitin). The chain crosses the membrane as a helical span at residues 164–194 (EGGLYLAVTLLAGITGVVITLCLILIITSST). Residues 195–203 (KTIRRSYFE) lie on the Cytoplasmic side of the membrane. Residues Arg199 and Ser200 each coordinate FAD. The helical transmembrane segment at 204 to 222 (VFWYTHHLFVIFFIGLAIH) threads the bilayer. Positions 206, 209, 222, 226, and 227 each coordinate heme b. Residues 223-267 (GAERIVRGQTAESLAVHNITVCEQKISEWGKIKECPIPQFAGNPP) are Extracellular-facing. N-linked (GlcNAc...) asparagine glycosylation is present at Asn240. A Glycyl lysine isopeptide (Lys-Gly) (interchain with G-Cter in ubiquitin) cross-link involves residue Lys255. Heme b-binding residues include Met268, Tyr280, and Arg287. A helical transmembrane segment spans residues 268–285 (MTWKWIVGPMFLYLCERL). The Cytoplasmic portion of the chain corresponds to 286-570 (VRFWRSQQKV…VHFIFNKENF (285 aa)). Residues 287 to 397 (RFWRSQQKVV…DGPFGTASED (111 aa)) enclose the FAD-binding FR-type domain. Residues Lys294, Lys299, Lys306, Lys328, and Lys334 each participate in a glycyl lysine isopeptide (Lys-Gly) (interchain with G-Cter in ubiquitin) cross-link. Positions 337, 338, 339, 341, 354, 356, 361, and 362 each coordinate FAD. Lys381 participates in a covalent cross-link: Glycyl lysine isopeptide (Lys-Gly) (interchain with G-Cter in ubiquitin). Residues Ile411, Arg446, and Thr481 each contribute to the NADPH site. A Glycyl lysine isopeptide (Lys-Gly) (interchain with G-Cter in ubiquitin) cross-link involves residue Lys506. Arg513 contributes to the NADPH binding site. A Glycyl lysine isopeptide (Lys-Gly) (interchain with G-Cter in ubiquitin) cross-link involves residue Lys567.

As to quaternary structure, component of the phagocyte NADPH oxidase core complex/cytochrome b558 complex, composed of CYBB (heavy chain (beta)) and CYBA (light chain (alpha)). Component of the phagocyte NADPH oxidase complex composed of an obligatory core heterodimer formed by the membrane proteins CYBA and CYBB and the cytosolic regulatory subunits NCF1/p47-phox, NCF2/p67-phox, NCF4/p40-phox and the small GTPase RAC1 or RAC2. Interacts with NCF1 (phosphorylated form). Interacts with NCF2; the interaction is enhanced in the presence of GBP7. Interacts with RAC2. Interacts with RAC1. Interacts with calprotectin (S100A8/9). Interacts with NRROS; the interaction is direct and impairs formation of a stable NADPH oxidase complex. Interacts with CYBC1; CYBC1 may act as a chaperone stabilizing Cytochrome b-245 heterodimer. The CYBA-CYBB complex interacts with GBP7. FAD serves as cofactor. Glycosylated. In terms of processing, phosphorylated on Ser and Thr residues by PKC during neutrophils activation. Phosphorylation enhances the NADPH oxidase activity and stimulates its interaction with RAC2, NCF2/p67-phox, and NCF1/p47-phox. Post-translationally, undergoes 'Lys-48'-linked polyubiquitination, likely by RNF145, triggering endoplasmic reticulum-associated degradation. In terms of tissue distribution, detected in neutrophils (at protein level).

The protein resides in the cell membrane. It catalyses the reaction NADPH + 2 O2 = 2 superoxide + NADP(+) + H(+). Its function is as follows. Catalytic subunit of the phagocyte NADPH oxidase complex that mediates the transfer of electrons from cytosolic NADPH to O2 to produce the superoxide anion (O2(-)). In the activated complex, electrons are first transferred from NADPH to flavin adenine dinucleotide (FAD) and subsequently transferred via two heme molecules to molecular oxygen, producing superoxide through an outer-sphere reaction. Activation of the NADPH oxidase complex is initiated by the assembly of cytosolic subunits of the NADPH oxidase complex with the core NADPH oxidase complex to form a complex at the plasma membrane or phagosomal membrane. This activation process is initiated by phosphorylation dependent binding of the cytosolic NCF1/p47-phox subunit to the C-terminus of CYBA/p22-phox. NADPH oxidase complex assembly is impaired through interaction with NRROS. The protein is NADPH oxidase 2 of Homo sapiens (Human).